Consider the following 309-residue polypeptide: Uricase-2 isozyme 1 (309 aa).

Catalysis depends on charge relay system residues Lys-18 and Thr-64. Residues Thr-64, Asp-65, Phe-166, Arg-183, Val-238, Gln-239, and Asn-265 each coordinate urate. His-267 (charge relay system) is an active-site residue. Residues 307–309 (SKL) carry the Microbody targeting signal motif.

Belongs to the uricase family. In terms of assembly, homotetramer. Post-translationally, the N-terminus is blocked. In terms of tissue distribution, expressed predominantly in the uninfected cells of the central tissue of the root nodule.

The protein localises to the peroxisome. It catalyses the reaction urate + O2 + H2O = 5-hydroxyisourate + H2O2. It functions in the pathway purine metabolism; urate degradation; (S)-allantoin from urate: step 1/3. Functionally, catalyzes the oxidation of uric acid to 5-hydroxyisourate, which is further processed to form (S)-allantoin. This chain is Uricase-2 isozyme 1, found in Glycine max (Soybean).